The sequence spans 438 residues: Serine--tRNA ligase (438 aa).

Position 245-247 (245-247) interacts with L-serine; that stretch reads TAE. Position 276-278 (276-278) interacts with ATP; that stretch reads RSE. Glutamate 299 serves as a coordination point for L-serine. 363-366 contributes to the ATP binding site; sequence EISS. Residue serine 398 participates in L-serine binding.

This sequence belongs to the class-II aminoacyl-tRNA synthetase family. Type-1 seryl-tRNA synthetase subfamily. In terms of assembly, homodimer. The tRNA molecule binds across the dimer.

It localises to the cytoplasm. The catalysed reaction is tRNA(Ser) + L-serine + ATP = L-seryl-tRNA(Ser) + AMP + diphosphate + H(+). It carries out the reaction tRNA(Sec) + L-serine + ATP = L-seryl-tRNA(Sec) + AMP + diphosphate + H(+). The protein operates within aminoacyl-tRNA biosynthesis; selenocysteinyl-tRNA(Sec) biosynthesis; L-seryl-tRNA(Sec) from L-serine and tRNA(Sec): step 1/1. Its function is as follows. Catalyzes the attachment of serine to tRNA(Ser). Is also able to aminoacylate tRNA(Sec) with serine, to form the misacylated tRNA L-seryl-tRNA(Sec), which will be further converted into selenocysteinyl-tRNA(Sec). This chain is Serine--tRNA ligase, found in Delftia acidovorans (strain DSM 14801 / SPH-1).